A 75-amino-acid polypeptide reads, in one-letter code: Small ribosomal subunit protein bS18 (75 aa).

It belongs to the bacterial ribosomal protein bS18 family. Part of the 30S ribosomal subunit. Forms a tight heterodimer with protein bS6.

Its function is as follows. Binds as a heterodimer with protein bS6 to the central domain of the 16S rRNA, where it helps stabilize the platform of the 30S subunit. This is Small ribosomal subunit protein bS18 from Buchnera aphidicola subsp. Baizongia pistaciae (strain Bp).